Here is a 200-residue protein sequence, read N- to C-terminus: 3-isopropylmalate dehydratase small subunit (200 aa).

Belongs to the LeuD family. LeuD type 1 subfamily. Heterodimer of LeuC and LeuD.

It catalyses the reaction (2R,3S)-3-isopropylmalate = (2S)-2-isopropylmalate. It participates in amino-acid biosynthesis; L-leucine biosynthesis; L-leucine from 3-methyl-2-oxobutanoate: step 2/4. Catalyzes the isomerization between 2-isopropylmalate and 3-isopropylmalate, via the formation of 2-isopropylmaleate. The polypeptide is 3-isopropylmalate dehydratase small subunit (Haemophilus influenzae (strain PittEE)).